The chain runs to 366 residues: MLQVNVELKERRYPITIGAGLLGDPNSYSSLKAGDKVMIVSNPTVAAHYLATVTNTLNGLGCSVDSVLIPDGEKYKTLDSLNMIFTALLEKNHNRDTTLIALGGGVIGDVAGYAAASYQRGIRFIQIPTTLLAQVDSSVGGKTAVNHPLGKNMIGAFYQPISVIIDTNTLQTLPKREVSAGLAEVIKYGAIFDIHFFEWLESNIHHLVALKQNELEYCIQRCCQLKADVVARDETEKGDRALLNLGHTFGHAIEAHLGYGNWLHGEAVSVGMLEAAELSRILGDLSAQDVSRLERLLAQAVLPTISPDGMEPSEYLPYMWRDKKVLGGQLRLVLLKSLGKAYVTAQASEQQVLSAIERFTQREFHE.

NAD(+) is bound by residues 71 to 76 (DGEKYK), 105 to 109 (GVIGD), 129 to 130 (TT), lysine 142, lysine 151, and 169 to 172 (TLQT). Residues glutamate 184, histidine 247, and histidine 264 each coordinate Zn(2+).

It belongs to the sugar phosphate cyclases superfamily. Dehydroquinate synthase family. The cofactor is Co(2+). Zn(2+) serves as cofactor. NAD(+) is required as a cofactor.

The protein resides in the cytoplasm. The catalysed reaction is 7-phospho-2-dehydro-3-deoxy-D-arabino-heptonate = 3-dehydroquinate + phosphate. It functions in the pathway metabolic intermediate biosynthesis; chorismate biosynthesis; chorismate from D-erythrose 4-phosphate and phosphoenolpyruvate: step 2/7. Catalyzes the conversion of 3-deoxy-D-arabino-heptulosonate 7-phosphate (DAHP) to dehydroquinate (DHQ). This is 3-dehydroquinate synthase from Actinobacillus pleuropneumoniae serotype 5b (strain L20).